The chain runs to 450 residues: Signal recognition particle 54 kDa protein (450 aa).

GTP-binding positions include 107–114 (GIQGSGKT), 188–192 (DTAGR), and 247–250 (TKLD).

Belongs to the GTP-binding SRP family. SRP54 subfamily. As to quaternary structure, part of the signal recognition particle protein translocation system, which is composed of SRP and FtsY. Archaeal SRP consists of a 7S RNA molecule of 300 nucleotides and two protein subunits: SRP54 and SRP19.

The protein resides in the cytoplasm. The catalysed reaction is GTP + H2O = GDP + phosphate + H(+). Functionally, involved in targeting and insertion of nascent membrane proteins into the cytoplasmic membrane. Binds to the hydrophobic signal sequence of the ribosome-nascent chain (RNC) as it emerges from the ribosomes. The SRP-RNC complex is then targeted to the cytoplasmic membrane where it interacts with the SRP receptor FtsY. The sequence is that of Signal recognition particle 54 kDa protein from Methanococcus maripaludis (strain DSM 14266 / JCM 13030 / NBRC 101832 / S2 / LL).